Here is a 153-residue protein sequence, read N- to C-terminus: Aspartate carbamoyltransferase regulatory chain (153 aa).

Residues Cys-109, Cys-114, Cys-138, and Cys-141 each coordinate Zn(2+).

It belongs to the PyrI family. As to quaternary structure, contains catalytic and regulatory chains. The cofactor is Zn(2+).

Its function is as follows. Involved in allosteric regulation of aspartate carbamoyltransferase. The polypeptide is Aspartate carbamoyltransferase regulatory chain (Salmonella newport (strain SL254)).